A 337-amino-acid chain; its full sequence is uncharacterized protein (337 aa).

The 59-residue stretch at 279–337 folds into the AFP-like domain; sequence SIVAKRNIKKGEYLSVDNISFKRPGRGIETKYLSIILNRKIKNDKEEDDIIYWDDLLGD.

It to B.subtilis SpsE.

This is an uncharacterized protein from Methanocaldococcus jannaschii (strain ATCC 43067 / DSM 2661 / JAL-1 / JCM 10045 / NBRC 100440) (Methanococcus jannaschii).